The sequence spans 471 residues: GDP-fucose protein O-fucosyltransferase 3 (471 aa).

Over 1–8 the chain is Cytoplasmic; that stretch reads MNRMWEKK. Residues 9 to 29 form a helical; Signal-anchor for type II membrane protein membrane-spanning segment; sequence FWISCFFIILFFILVTLQVMV. Over 30–471 the chain is Lumenal; that stretch reads ELGRFEKRET…EFWNLVFKFQ (442 aa). N-linked (GlcNAc...) asparagine glycosylation is found at Asn-102, Asn-122, Asn-160, and Asn-310. Cys-381 and Cys-384 are oxidised to a cystine. Asn-457 carries N-linked (GlcNAc...) asparagine glycosylation.

Belongs to the glycosyltransferase 10 family.

It is found in the endoplasmic reticulum membrane. It catalyses the reaction L-threonyl-[protein] + GDP-beta-L-fucose = 3-O-(alpha-L-fucosyl)-L-threonyl-[protein] + GDP + H(+). The enzyme catalyses L-seryl-[protein] + GDP-beta-L-fucose = 3-O-(alpha-L-fucosyl)-L-seryl-[protein] + GDP + H(+). It functions in the pathway protein modification; protein glycosylation. In terms of biological role, protein O-fucosyltransferase that specifically catalyzes O-fucosylation of serine or threonine residues in EMI domains of target proteins. Attaches fucose through an O-glycosidic linkage. O-fucosylation of EMI domain-containing proteins may be required for facilitating protein folding and secretion. In Xenopus tropicalis (Western clawed frog), this protein is GDP-fucose protein O-fucosyltransferase 3 (fut10).